Reading from the N-terminus, the 173-residue chain is Flagellar assembly factor FliW (173 aa).

Positions 152-173 (STTVRRKASPPAAGEDKGDVQE) are disordered.

Belongs to the FliW family. In terms of assembly, interacts with translational regulator CsrA and flagellin(s).

The protein localises to the cytoplasm. Acts as an anti-CsrA protein, binds CsrA and prevents it from repressing translation of its target genes, one of which is flagellin. Binds to flagellin and participates in the assembly of the flagellum. This is Flagellar assembly factor FliW from Nitratidesulfovibrio vulgaris (strain ATCC 29579 / DSM 644 / CCUG 34227 / NCIMB 8303 / VKM B-1760 / Hildenborough) (Desulfovibrio vulgaris).